Consider the following 87-residue polypeptide: Small ribosomal subunit protein bS20 (87 aa).

The protein belongs to the bacterial ribosomal protein bS20 family.

In terms of biological role, binds directly to 16S ribosomal RNA. The chain is Small ribosomal subunit protein bS20 from Corynebacterium urealyticum (strain ATCC 43042 / DSM 7109).